The primary structure comprises 129 residues: Small ribosomal subunit protein uS11 (129 aa).

Belongs to the universal ribosomal protein uS11 family. As to quaternary structure, part of the 30S ribosomal subunit. Interacts with proteins S7 and S18. Binds to IF-3.

Functionally, located on the platform of the 30S subunit, it bridges several disparate RNA helices of the 16S rRNA. Forms part of the Shine-Dalgarno cleft in the 70S ribosome. The polypeptide is Small ribosomal subunit protein uS11 (Lactiplantibacillus plantarum (strain ATCC BAA-793 / NCIMB 8826 / WCFS1) (Lactobacillus plantarum)).